The primary structure comprises 220 residues: Chaperone protein TorD (220 aa).

The protein belongs to the TorD/DmsD family. TorD subfamily.

It is found in the cytoplasm. Functionally, involved in the biogenesis of TorA. Acts on TorA before the insertion of the molybdenum cofactor and, as a result, probably favors a conformation of the apoenzyme that is competent for acquiring the cofactor. The sequence is that of Chaperone protein TorD from Vibrio cholerae serotype O1 (strain ATCC 39315 / El Tor Inaba N16961).